The sequence spans 461 residues: NADP-specific glutamate dehydrogenase (461 aa).

The active site involves lysine 115.

The protein belongs to the Glu/Leu/Phe/Val dehydrogenases family. Homohexamer.

It catalyses the reaction L-glutamate + NADP(+) + H2O = 2-oxoglutarate + NH4(+) + NADPH + H(+). The chain is NADP-specific glutamate dehydrogenase (GDH) from Penicillium chrysogenum (Penicillium notatum).